Reading from the N-terminus, the 606-residue chain is Leucine-rich repeat and immunoglobulin-like domain-containing nogo receptor-interacting protein 1 (606 aa).

The N-terminal stretch at Met-1–Gly-27 is a signal peptide. Intrachain disulfides connect Cys-28–Cys-34 and Cys-32–Cys-43. Residues Cys-28–Thr-57 enclose the LRRNT domain. The Extracellular segment spans residues Cys-28–Thr-547. 11 LRR repeats span residues Asp-58–Ala-79, Tyr-82–Gly-103, Asn-106–Gly-127, Asn-130–Asp-151, Asn-154–Gly-175, Ser-178–His-199, Gly-202–Arg-223, Asn-250–His-271, Tyr-274–Glu-295, Arg-298–Gly-319, and His-322–Ser-343. An N-linked (GlcNAc...) asparagine glycan is attached at Asn-130. Asn-188 carries N-linked (GlcNAc...) asparagine glycosylation. Asn-250, Asn-260, and Asn-279 each carry an N-linked (GlcNAc...) asparagine glycan. Residues Asn-327, Asn-374, Asn-478, Asn-491, Asn-512, Asn-523, and Asn-528 are each glycosylated (N-linked (GlcNAc...) asparagine). The region spanning Asn-355–Arg-409 is the LRRCT domain. 3 disulfide bridges follow: Cys-359/Cys-382, Cys-361/Cys-407, and Cys-432/Cys-483. The Ig-like C2-type domain occupies Pro-397 to Ala-496. Residues Thr-548 to Trp-568 traverse the membrane as a helical segment. Residues Ser-569–Ile-606 lie on the Cytoplasmic side of the membrane.

The protein localises to the cell membrane. Functionally, may play a role in regulating axonal regeneration and plasticity in the adult central nervous system. The protein is Leucine-rich repeat and immunoglobulin-like domain-containing nogo receptor-interacting protein 1 (lingo1) of Xenopus tropicalis (Western clawed frog).